Here is a 346-residue protein sequence, read N- to C-terminus: MQLADLTQRLAALGAKPQHIGRITRAWLQGKPLDTGTKHQKTENFLPLSVRQELPAIAAELDALVRLRSEHPGADGSARLLVELADKQMVESVLLPRDGLCISSQVGCAVGCVFCMTGKSGLLRQLSSAEMVAQVALGRRFRPVKKVVFMGMGEPAHNLDNVLEAIDLLGTEGGIGHKNLVFSTVGDPRVFERLPQQRVRPALALSLHTTDAELRQRLLPKAPRIDPEQLMELGEAYARSIDYPIQYQWTLLKGINDSQQEMDNILRLFKGKFAVLNLIPYNSLDADNYQRPDGERIVQMVRYLHSRGVLTKVRNSAGQDIDGGCGQLRARAVDLVNTSRLRLSRH.

Glu-91 acts as the Proton acceptor in catalysis. In terms of domain architecture, Radical SAM core spans 94–320 (LLPRDGLCIS…TKVRNSAGQD (227 aa)). The cysteines at positions 101 and 325 are disulfide-linked. 3 residues coordinate [4Fe-4S] cluster: Cys-108, Cys-112, and Cys-115. S-adenosyl-L-methionine is bound by residues 153–154 (GE), Ser-183, 206–208 (SLH), and Asn-282. Cys-325 (S-methylcysteine intermediate) is an active-site residue.

The protein belongs to the radical SAM superfamily. RlmN family. Requires [4Fe-4S] cluster as cofactor.

It is found in the cytoplasm. The protein is Probable RNA methyltransferase Pmen_2155 of Ectopseudomonas mendocina (strain ymp) (Pseudomonas mendocina).